The chain runs to 343 residues: Phosphoribosylformylglycinamidine cyclo-ligase (343 aa).

This sequence belongs to the AIR synthase family.

It is found in the cytoplasm. The enzyme catalyses 2-formamido-N(1)-(5-O-phospho-beta-D-ribosyl)acetamidine + ATP = 5-amino-1-(5-phospho-beta-D-ribosyl)imidazole + ADP + phosphate + H(+). It functions in the pathway purine metabolism; IMP biosynthesis via de novo pathway; 5-amino-1-(5-phospho-D-ribosyl)imidazole from N(2)-formyl-N(1)-(5-phospho-D-ribosyl)glycinamide: step 2/2. The protein is Phosphoribosylformylglycinamidine cyclo-ligase of Enterococcus faecalis (strain ATCC 700802 / V583).